The chain runs to 516 residues: Golgi-associated kinase 1B (516 aa).

Residues 1-37 (MTCPDKLGQLINWFVCSLCAPRVCKLWSSRRPRTRRN) are Cytoplasmic-facing. A helical; Signal-anchor for type II membrane protein membrane pass occupies residues 38–55 (LLLGTACAIYLGFLVSQV). The Extracellular portion of the chain corresponds to 56–516 (GKGSFQHGQA…HGARVLPMNE (461 aa)). Asn-286 is a glycosylation site (N-linked (GlcNAc...) asparagine).

It belongs to the GASK family.

The protein resides in the golgi apparatus membrane. This chain is Golgi-associated kinase 1B, found in Rattus norvegicus (Rat).